The sequence spans 345 residues: N-acetyl-gamma-glutamyl-phosphate reductase (345 aa).

Residue C153 is part of the active site.

This sequence belongs to the NAGSA dehydrogenase family. Type 1 subfamily.

It is found in the cytoplasm. It carries out the reaction N-acetyl-L-glutamate 5-semialdehyde + phosphate + NADP(+) = N-acetyl-L-glutamyl 5-phosphate + NADPH + H(+). It participates in amino-acid biosynthesis; L-arginine biosynthesis; N(2)-acetyl-L-ornithine from L-glutamate: step 3/4. Functionally, catalyzes the NADPH-dependent reduction of N-acetyl-5-glutamyl phosphate to yield N-acetyl-L-glutamate 5-semialdehyde. The protein is N-acetyl-gamma-glutamyl-phosphate reductase of Methylacidiphilum infernorum (isolate V4) (Methylokorus infernorum (strain V4)).